The chain runs to 446 residues: Neuraminidase (446 aa).

The interval 13–65 (HFNQYECDSLADNQVMPCEPIIIERNITEIIYLTNTTIEKEICPKLMEYRNWS) is hypervariable stalk region. N-linked (GlcNAc...) asparagine; by host glycosylation is found at N38, N47, and N63. Residues 68–446 (QCKITGFAPF…DGANINFMPI (379 aa)) are head of neuraminidase. Disulfide bonds link C69–C394, C101–C106, C160–C207, C209–C214, C255–C268, C257–C266, C295–C314, and C398–C424. Residue R95 participates in substrate binding. N123 carries N-linked (GlcNAc...) asparagine; by host glycosylation. The Proton donor/acceptor role is filled by D128. R129 contacts substrate. N177 and N211 each carry an N-linked (GlcNAc...) asparagine; by host glycan. 253-254 (EE) provides a ligand contact to substrate. R269 is a substrate binding site. Positions 270, 274, and 301 each coordinate Ca(2+). The disordered stretch occupies residues 304-327 (RNNDRSSSSDCKNPNNDKGNHGVK). Over residues 308 to 320 (RSSSSDCKNPNND) the composition is skewed to polar residues. R348 contacts substrate. N-linked (GlcNAc...) asparagine; by host glycosylation is present at N379. Catalysis depends on Y383, which acts as the Nucleophile.

This sequence belongs to the glycosyl hydrolase 34 family. As to quaternary structure, homotetramer. Ca(2+) serves as cofactor. In terms of processing, N-glycosylated.

The protein resides in the virion membrane. Its subcellular location is the host apical cell membrane. It catalyses the reaction Hydrolysis of alpha-(2-&gt;3)-, alpha-(2-&gt;6)-, alpha-(2-&gt;8)- glycosidic linkages of terminal sialic acid residues in oligosaccharides, glycoproteins, glycolipids, colominic acid and synthetic substrates.. Inhibited by the neuraminidase inhibitors zanamivir (Relenza) and oseltamivir (Tamiflu). These drugs interfere with the release of progeny virus from infected cells and are effective against all influenza strains. Resistance to neuraminidase inhibitors is quite rare. Functionally, catalyzes the removal of terminal sialic acid residues from viral and cellular glycoconjugates. Cleaves off the terminal sialic acids on the glycosylated HA during virus budding to facilitate virus release. Additionally helps virus spread through the circulation by further removing sialic acids from the cell surface. These cleavages prevent self-aggregation and ensure the efficient spread of the progeny virus from cell to cell. Otherwise, infection would be limited to one round of replication. Described as a receptor-destroying enzyme because it cleaves a terminal sialic acid from the cellular receptors. May facilitate viral invasion of the upper airways by cleaving the sialic acid moieties on the mucin of the airway epithelial cells. Likely to plays a role in the budding process through its association with lipid rafts during intracellular transport. May additionally display a raft-association independent effect on budding. Plays a role in the determination of host range restriction on replication and virulence. Sialidase activity in late endosome/lysosome traffic seems to enhance virus replication. The protein is Neuraminidase of Influenza A virus (strain A/Swine/Hong Kong/127/1982 H3N2).